The primary structure comprises 503 residues: Cysteine desulfurase, mitochondrial (503 aa).

A mitochondrion-targeting transit peptide spans 1–27 (MSNIAPQVLRHASRACSRRLSLSASLV). A compositionally biased stretch (low complexity) spans 34 to 50 (RTVTGSGSGGRRYVSGS). The segment at 34 to 58 (RTVTGSGSGGRRYVSGSQRHNAQAQ) is disordered. Residues 172 to 173 (AT), asparagine 254, glutamine 282, and 302 to 304 (SGH) contribute to the pyridoxal 5'-phosphate site. Lysine 305 carries the N6-(pyridoxal phosphate)lysine modification. Residue threonine 342 coordinates pyridoxal 5'-phosphate. Residue cysteine 427 is the Cysteine persulfide intermediate of the active site. Cysteine 427 is a binding site for [2Fe-2S] cluster.

It belongs to the class-V pyridoxal-phosphate-dependent aminotransferase family. NifS/IscS subfamily. It depends on pyridoxal 5'-phosphate as a cofactor.

It is found in the mitochondrion. The enzyme catalyses (sulfur carrier)-H + L-cysteine = (sulfur carrier)-SH + L-alanine. Catalyzes the removal of elemental sulfur from cysteine to produce alanine. It supplies the inorganic sulfur for iron-sulfur (Fe-S) clusters. Plays a role in both tRNA-processing and mitochondrial metabolism. Involved in the 2-thio-modification of both 5-carboxymethylaminomethyl-2-thiouridine in mitochondrial tRNAs and 5-methoxycarbonylmethyl-2-thiouridine (mcm5s2U) in cytoplasmic tRNAs. This Arthroderma benhamiae (strain ATCC MYA-4681 / CBS 112371) (Trichophyton mentagrophytes) protein is Cysteine desulfurase, mitochondrial.